Consider the following 172-residue polypeptide: Capsid protein (172 aa).

Residues 1–26 are disordered; that stretch reads MASKWNWSGTKGRRTPRRPYGRPYKS. Residues 11 to 20 are compositionally biased toward basic residues; the sequence is KGRRTPRRPY.

Belongs to the nanoviridae capsid protein family.

The protein localises to the virion. In Faba bean necrotic yellows virus (isolate Syrian SV292-88) (FBNYV), this protein is Capsid protein (DNA-S).